Consider the following 246-residue polypeptide: Mast cell protease 1 (246 aa).

Residues 1-18 (MQALLFLLALLWPPEAGA) form the signal peptide. Residues 19 to 20 (EE) constitute a propeptide, activation peptide. A Peptidase S1 domain is found at 21 to 244 (IIGGVESKPH…YVPWINLVIR (224 aa)). Cysteines 50 and 66 form a disulfide. Catalysis depends on charge relay system residues His-65 and Asp-109. Cystine bridges form between Cys-143–Cys-208 and Cys-174–Cys-187. Ser-202 (charge relay system) is an active-site residue.

The protein belongs to the peptidase S1 family. Granzyme subfamily.

This chain is Mast cell protease 1, found in Meriones unguiculatus (Mongolian jird).